The sequence spans 287 residues: Acetyl-coenzyme A carboxylase carboxyl transferase subunit beta (287 aa).

The region spanning 25–287 is the CoA carboxyltransferase N-terminal domain; that stretch reads VWTKCSACEQ…KMLNTHVIEE (263 aa). Zn(2+)-binding residues include cysteine 29, cysteine 32, cysteine 48, and cysteine 51. The C4-type zinc-finger motif lies at 29-51; sequence CSACEQVLYRAELERNLEVCPKC.

It belongs to the AccD/PCCB family. In terms of assembly, acetyl-CoA carboxylase is a heterohexamer composed of biotin carboxyl carrier protein (AccB), biotin carboxylase (AccC) and two subunits each of ACCase subunit alpha (AccA) and ACCase subunit beta (AccD). It depends on Zn(2+) as a cofactor.

It localises to the cytoplasm. It carries out the reaction N(6)-carboxybiotinyl-L-lysyl-[protein] + acetyl-CoA = N(6)-biotinyl-L-lysyl-[protein] + malonyl-CoA. The protein operates within lipid metabolism; malonyl-CoA biosynthesis; malonyl-CoA from acetyl-CoA: step 1/1. Component of the acetyl coenzyme A carboxylase (ACC) complex. Biotin carboxylase (BC) catalyzes the carboxylation of biotin on its carrier protein (BCCP) and then the CO(2) group is transferred by the transcarboxylase to acetyl-CoA to form malonyl-CoA. This is Acetyl-coenzyme A carboxylase carboxyl transferase subunit beta from Aeromonas hydrophila subsp. hydrophila (strain ATCC 7966 / DSM 30187 / BCRC 13018 / CCUG 14551 / JCM 1027 / KCTC 2358 / NCIMB 9240 / NCTC 8049).